A 353-amino-acid chain; its full sequence is COMPASS component SPP1 (353 aa).

Residues 22 to 72 (DVYCICKRPDYGELMVGCDGCDDWFHFTCLHIPEQFKDLVFSFYCPYCQAG) form a PHD-type zinc finger. Residues cysteine 25, cysteine 27, cysteine 39, cysteine 42, histidine 47, cysteine 50, cysteine 66, and cysteine 69 each coordinate Zn(2+). The interval 83-124 (NGEGSLPKTLWKRKCRISDCYKPCLQDSKYCSEEHGREFVND) is non coventional C3H-type zinc finger. The residue at position 87 (serine 87) is a Phosphoserine. Zn(2+) contacts are provided by cysteine 97, cysteine 102, cysteine 113, and histidine 117. Positions 235–244 (VECGKEDSKG) are enriched in basic and acidic residues. Positions 235–255 (VECGKEDSKGTKRKKKKNSSR) are disordered. A compositionally biased stretch (basic residues) spans 245–255 (TKRKKKKNSSR).

In terms of assembly, component of the Set1C/COMPASS complex which consists of SET1(2), BRE2(2), SPP1(2), SDC1(1), SHG1(1), SWD1(1), SWD2(1), and SWD3(1).

The protein localises to the nucleus. Its function is as follows. Component of the Set1C/COMPASS complex that specifically mono-, di- and trimethylates histone H3 to form H3K4me1/2/3, which subsequently plays a role in telomere length maintenance and transcription elongation regulation. COMPASS recognizes ubiquitinated H2B on one face of the nucleosome which stimulates the methylation of H3 on the opposing face. SPP1/CPS40 can recognize methylated histone lysine residue H3K4me3 or unmethylated H3K4. Stimulates the RNA binding activity of SET1. This chain is COMPASS component SPP1, found in Saccharomyces cerevisiae (strain ATCC 204508 / S288c) (Baker's yeast).